We begin with the raw amino-acid sequence, 180 residues long: Segregation and condensation protein B (180 aa).

The protein belongs to the ScpB family. Homodimer. Homodimerization may be required to stabilize the binding of ScpA to the Smc head domains. Component of a cohesin-like complex composed of ScpA, ScpB and the Smc homodimer, in which ScpA and ScpB bind to the head domain of Smc. The presence of the three proteins is required for the association of the complex with DNA.

It is found in the cytoplasm. In terms of biological role, participates in chromosomal partition during cell division. May act via the formation of a condensin-like complex containing Smc and ScpA that pull DNA away from mid-cell into both cell halves. This is Segregation and condensation protein B from Staphylococcus aureus (strain MSSA476).